An 88-amino-acid polypeptide reads, in one-letter code: Small ribosomal subunit protein bS16c (88 aa).

The protein belongs to the bacterial ribosomal protein bS16 family.

It localises to the plastid. The protein resides in the chloroplast. This chain is Small ribosomal subunit protein bS16c, found in Lactuca sativa (Garden lettuce).